The primary structure comprises 359 residues: Nicotinate-nucleotide--dimethylbenzimidazole phosphoribosyltransferase (359 aa).

Residue Glu318 is the Proton acceptor of the active site.

It belongs to the CobT family. As to quaternary structure, homodimer.

The enzyme catalyses 5,6-dimethylbenzimidazole + nicotinate beta-D-ribonucleotide = alpha-ribazole 5'-phosphate + nicotinate + H(+). It participates in nucleoside biosynthesis; alpha-ribazole biosynthesis; alpha-ribazole from 5,6-dimethylbenzimidazole: step 1/2. Catalyzes the synthesis of alpha-ribazole-5'-phosphate from nicotinate mononucleotide (NAMN) and 5,6-dimethylbenzimidazole (DMB). The chain is Nicotinate-nucleotide--dimethylbenzimidazole phosphoribosyltransferase from Escherichia coli (strain SMS-3-5 / SECEC).